Reading from the N-terminus, the 206-residue chain is Orotate phosphoribosyltransferase (206 aa).

Residues Lys-26, 72-73, Arg-99, Lys-100, Lys-103, His-105, and 124-132 each bind 5-phospho-alpha-D-ribose 1-diphosphate; these read YK and DDVMTSGFS. Residues Thr-128 and Arg-157 each contribute to the orotate site.

The protein belongs to the purine/pyrimidine phosphoribosyltransferase family. PyrE subfamily. Homodimer. The cofactor is Mg(2+).

The catalysed reaction is orotidine 5'-phosphate + diphosphate = orotate + 5-phospho-alpha-D-ribose 1-diphosphate. The protein operates within pyrimidine metabolism; UMP biosynthesis via de novo pathway; UMP from orotate: step 1/2. Catalyzes the transfer of a ribosyl phosphate group from 5-phosphoribose 1-diphosphate to orotate, leading to the formation of orotidine monophosphate (OMP). This is Orotate phosphoribosyltransferase from Buchnera aphidicola subsp. Baizongia pistaciae (strain Bp).